The chain runs to 237 residues: tRNA (guanine-N(7)-)-methyltransferase (237 aa).

Glu-56, Glu-81, Asp-108, and Asp-131 together coordinate S-adenosyl-L-methionine. Residue Asp-131 is part of the active site. Substrate is bound by residues Lys-135, Asp-167, and 204 to 207 (TKFE).

The protein belongs to the class I-like SAM-binding methyltransferase superfamily. TrmB family.

The enzyme catalyses guanosine(46) in tRNA + S-adenosyl-L-methionine = N(7)-methylguanosine(46) in tRNA + S-adenosyl-L-homocysteine. Its pathway is tRNA modification; N(7)-methylguanine-tRNA biosynthesis. In terms of biological role, catalyzes the formation of N(7)-methylguanine at position 46 (m7G46) in tRNA. This is tRNA (guanine-N(7)-)-methyltransferase from Legionella pneumophila (strain Paris).